The sequence spans 306 residues: Curved DNA-binding protein (306 aa).

The region spanning 5–69 (DYYAIMGVKP…QRRAEYDQMW (65 aa)) is the J domain.

The protein resides in the cytoplasm. Its subcellular location is the nucleoid. Functionally, DNA-binding protein that preferentially recognizes a curved DNA sequence. It is probably a functional analog of DnaJ; displays overlapping activities with DnaJ, but functions under different conditions, probably acting as a molecular chaperone in an adaptive response to environmental stresses other than heat shock. Lacks autonomous chaperone activity; binds native substrates and targets them for recognition by DnaK. Its activity is inhibited by the binding of CbpM. This is Curved DNA-binding protein from Escherichia coli O7:K1 (strain IAI39 / ExPEC).